The chain runs to 702 residues: Polyribonucleotide nucleotidyltransferase 1 (702 aa).

Aspartate 483 and aspartate 489 together coordinate Mg(2+). One can recognise a KH domain in the interval 550 to 609; it reads PQVTKLKVHPDKVREVIGAGGKVINKIIDETGVKINIENDGTIYIAAPDQESARVALEMI. The S1 motif domain maps to 619 to 687; the sequence is GEVYTGKVIK…PQGKIGLSRK (69 aa).

The protein belongs to the polyribonucleotide nucleotidyltransferase family. It depends on Mg(2+) as a cofactor.

It localises to the cytoplasm. The catalysed reaction is RNA(n+1) + phosphate = RNA(n) + a ribonucleoside 5'-diphosphate. Functionally, involved in mRNA degradation. Catalyzes the phosphorolysis of single-stranded polyribonucleotides processively in the 3'- to 5'-direction. In Alkaliphilus metalliredigens (strain QYMF), this protein is Polyribonucleotide nucleotidyltransferase 1.